The chain runs to 186 residues: ATP synthase subunit delta (186 aa).

The protein belongs to the ATPase delta chain family. As to quaternary structure, F-type ATPases have 2 components, F(1) - the catalytic core - and F(0) - the membrane proton channel. F(1) has five subunits: alpha(3), beta(3), gamma(1), delta(1), epsilon(1). CF(0) has four main subunits: a(1), b(1), b'(1) and c(10-14). The alpha and beta chains form an alternating ring which encloses part of the gamma chain. F(1) is attached to F(0) by a central stalk formed by the gamma and epsilon chains, while a peripheral stalk is formed by the delta, b and b' chains.

It localises to the cell inner membrane. Its function is as follows. F(1)F(0) ATP synthase produces ATP from ADP in the presence of a proton or sodium gradient. F-type ATPases consist of two structural domains, F(1) containing the extramembraneous catalytic core and F(0) containing the membrane proton channel, linked together by a central stalk and a peripheral stalk. During catalysis, ATP synthesis in the catalytic domain of F(1) is coupled via a rotary mechanism of the central stalk subunits to proton translocation. This protein is part of the stalk that links CF(0) to CF(1). It either transmits conformational changes from CF(0) to CF(1) or is implicated in proton conduction. The polypeptide is ATP synthase subunit delta (Rhodopseudomonas palustris (strain BisB18)).